The sequence spans 140 residues: MPSSVQATAGLLATLMMFCGEVAMARSLLLAEPSQLAGQWQAVLSSPQDNAQTQAMQDKPSNSCLVELKVDQTLGGQTDCLGQWLGDEPVRWFTEPDGLSLIGKQDSRTHLGLRQGDHYQMTLKSGLILRLERNKSQSAH.

A signal peptide spans 1 to 25 (MPSSVQATAGLLATLMMFCGEVAMA).

The protein belongs to the protease inhibitor I38 family.

It localises to the periplasm. Inhibitor of the alkaline protease. The polypeptide is Alkaline proteinase inhibitor (inh) (Pseudomonas brassicacearum (strain NFM421)).